The sequence spans 545 residues: Spermatogenesis-associated serine-rich protein 2 (545 aa).

The span at 85–96 shows a compositional bias: basic residues; that stretch reads GKKKNKKKKNKP. The interval 85–137 is disordered; sequence GKKKNKKKKNKPKPAAEPSNGIPDSSKSVSIQEEQSAPSSEKGGMNGYHVNGA. Over residues 106 to 123 the composition is skewed to polar residues; sequence IPDSSKSVSIQEEQSAPS. Ser143, Ser146, and Ser148 each carry phosphoserine. Disordered regions lie at residues 197-216 and 369-545; these read HNSQ…TTET and GQVS…AVNS. The segment covering 369 to 378 has biased composition (polar residues); sequence GQVSHPKNSY. Low complexity-rich tracts occupy residues 379–415 and 475–490; these read STRS…LTSA and RYRN…RYQS. The segment covering 491-514 has biased composition (polar residues); that stretch reads APSQAPGNTIERGQTHSAGTNGTG. Ser520 is modified (phosphoserine).

The protein belongs to the SPATS2 family.

Its subcellular location is the cytoplasm. The protein is Spermatogenesis-associated serine-rich protein 2 (SPATS2) of Homo sapiens (Human).